Here is a 433-residue protein sequence, read N- to C-terminus: Glutamate-1-semialdehyde 2,1-aminomutase (433 aa).

Lys272 carries the post-translational modification N6-(pyridoxal phosphate)lysine.

It belongs to the class-III pyridoxal-phosphate-dependent aminotransferase family. HemL subfamily. As to quaternary structure, homodimer. Pyridoxal 5'-phosphate serves as cofactor.

It localises to the cytoplasm. It carries out the reaction (S)-4-amino-5-oxopentanoate = 5-aminolevulinate. It functions in the pathway porphyrin-containing compound metabolism; protoporphyrin-IX biosynthesis; 5-aminolevulinate from L-glutamyl-tRNA(Glu): step 2/2. The protein operates within porphyrin-containing compound metabolism; chlorophyll biosynthesis. This is Glutamate-1-semialdehyde 2,1-aminomutase from Synechococcus sp. (strain WH7803).